A 129-amino-acid polypeptide reads, in one-letter code: Large ribosomal subunit protein bL19 (129 aa).

It belongs to the bacterial ribosomal protein bL19 family.

Functionally, this protein is located at the 30S-50S ribosomal subunit interface and may play a role in the structure and function of the aminoacyl-tRNA binding site. The protein is Large ribosomal subunit protein bL19 of Paraburkholderia phytofirmans (strain DSM 17436 / LMG 22146 / PsJN) (Burkholderia phytofirmans).